We begin with the raw amino-acid sequence, 409 residues long: Inner membrane transport protein YqeG (409 aa).

Topologically, residues 1 to 25 (MSNIWSKEETLWSFALYGTAVGAGT) are periplasmic. A helical transmembrane segment spans residues 26-46 (LFLPIQLGSAGAVVLFITALV). Residues 47-87 (AWPLTYWPHKALCQFILSSKTSAGEGITGAVTHYYGKKIGN) are Cytoplasmic-facing. Residues 88–108 (LITTLYFIAFFVVVLIYAVAI) traverse the membrane as a helical segment. Residues 109 to 127 (TNSLTEQLAKHMVIDLRIR) lie on the Periplasmic side of the membrane. Residues 128 to 148 (MLVSLGVVLILNLIFLMGRHA) form a helical membrane-spanning segment. The Cytoplasmic portion of the chain corresponds to 149-151 (TIR). Residues 152-172 (VMGFLVFPLIAYFLFLSIYLV) form a helical membrane-spanning segment. At 173–193 (GSWQPDLLTTQVEFNQNTLHQ) the chain is on the periplasmic side. Residues 194–214 (IWISIPVMVFAFSHTPIISTF) traverse the membrane as a helical segment. The Cytoplasmic segment spans residues 215 to 235 (AIDRREKYGEHAMDKCKKIMK). The helical transmembrane segment at 236–256 (VAYLIICISVLFFVFSCLLSI) threads the bilayer. Residues 257–276 (PPSYIEAAKEEGVTILSALS) lie on the Periplasmic side of the membrane. Residues 277–297 (MLPNAPAWLSISGIIVAVVAM) form a helical membrane-spanning segment. Over 298-329 (SKSFLGTYFGVIEGATEVVKTTLQQVGVKKSR) the chain is Cytoplasmic. Residues 330 to 350 (AFNRALSIMLVSLITFIVCCI) traverse the membrane as a helical segment. The Periplasmic portion of the chain corresponds to 351 to 353 (NPN). The chain crosses the membrane as a helical span at residues 354–374 (AISMIYAISGPLIAMILFIMP). The Cytoplasmic segment spans residues 375 to 388 (TLSTYLIPALKPWR). A helical membrane pass occupies residues 389-409 (SIGNLITLIVGILCVSVMFFS).

It belongs to the amino acid/polyamine transporter 2 family. SdaC/TdcC subfamily.

It localises to the cell inner membrane. The polypeptide is Inner membrane transport protein YqeG (yqeG) (Escherichia coli O6:H1 (strain CFT073 / ATCC 700928 / UPEC)).